We begin with the raw amino-acid sequence, 660 residues long: MAPEARQLKVHLRENEAVAQCVLEKWRSMEEKPGGLKENLAHTLYKSYRNVCAAKEPIRSLKDLYQIKGVGKWVIRQLKGSFPESSPDLSPPESNAAGEKGKKAGGSKRYVPQKNSAAYAILITLHRETINGKSHMKKQELIDATEASGLSRSAIGPDKSKAKPGAFASSQKDWYTGWSCMKTLTSKGLVAKSGNPAKYMITEEGKSTALECLSRSGLDDHAAPLVINSAPDTSNASHKLNNICMTSFVETSSGPSRAIGRPKTSIANPATKTSPEVTYLTSQESLNYNSDVRTAENCAEEIILSDSDSEELYTENYPLIGSEEFTERVAPPILNASNSGKTTTNYRFSDCSASISPRSSEGTFEMQSSSTMGIAEFNMLDNDTVCMDNSILAMPPRRSSKNFLEDYEVVLILDDRENFGGRSRKTVDNIHSQFRVPVEIKHLPVGDGIWIARDRKLHTEYVLDFIVERKNVADLCSSITDNRYKDQKLRLKKCGLRKLIYLVEGDPNPLDTSERIKTACFTTEILEGFDVQRTPGYAETVRTYGNLTHSITEYYSTHFSTGANTSQVCLTYDEFTKKCDDLKKITVSDVFALQLMQVPQVTEEAALAVIGLYPTLFSLAKAYSMLDGDTHAQEKMLKNKSTLINAGASRNIFKLVWAEG.

Positions 62–81 match the Helix-hairpin-helix motif 1 motif; the sequence is KDLYQIKGVGKWVIRQLKGS. Over residues 82-98 the composition is skewed to low complexity; it reads FPESSPDLSPPESNAAG. The segment at 82-109 is disordered; it reads FPESSPDLSPPESNAAGEKGKKAGGSKR. One can recognise an ERCC4 domain in the interval 411 to 506; the sequence is LILDDRENFG…RKLIYLVEGD (96 aa). Residues 586 to 623 carry the Helix-hairpin-helix motif 2 motif; it reads TVSDVFALQLMQVPQVTEEAALAVIGLYPTLFSLAKAY.

Belongs to the XPF family. As to quaternary structure, forms a heterodimer with EME1. Interacts with RAD54. Requires Mg(2+) as cofactor. The cofactor is Ca(2+). Low expression in shoots and roots from etiolated seedlings, and panicles after meiosis; moderate expression in young panicles under differentiation of floral organs before and during meiosis; and high expression in mature leaves.

The protein resides in the nucleus. In terms of biological role, interacts with EME1 to form a DNA structure-specific endonuclease with substrate preference for branched DNA structures with a 5'-end at the branch nick. Typical substrates include 3'-flap structures, D-loops, replication forks, nicked Holliday junctions and also intact Holliday junctions with a reduced efficiency. May be required in mitosis for the processing of stalled or collapsed replication fork intermediates. Plays a role in DNA repair and in genotoxic stress-induced homologous recombination (HR) in somatic cells. Mediates a subset of meiotic recombination events that are insensitive to crossover interference. This is Crossover junction endonuclease MUS81 (MUS81) from Oryza sativa subsp. japonica (Rice).